The sequence spans 805 residues: Rho GTPase-activating protein 42 (805 aa).

The 256-residue stretch at 7–262 (EFSDSFLDSP…IRSAEQDFKA (256 aa)) folds into the BAR domain. Positions 225-262 (KQQLQFNLQNTRNNFESTRQEVENLMRRIRSAEQDFKA) form a coiled coil. The PH domain occupies 265–374 (QWTMEGFLYV…WMEAMDGKEP (110 aa)). The Rho-GAP domain maps to 376–572 (YTLPALLSKK…ILIENYDKIF (197 aa)). Disordered stretches follow at residues 576-600 (PDPN…RSKA), 625-725 (SDTF…SELL), and 765-805 (VSRS…PGSV). The segment covering 626–654 (DTFSSSPSSTPMGSMESLSSHSSEQNSCS) has biased composition (low complexity). Polar residues predominate over residues 670–693 (LCWTTPSPSTNGPKSPACTTSPDS). Basic and acidic residues predominate over residues 694 to 704 (SSKEDANKTDG). Residues 710 to 721 (LSTSPGDRSSPA) show a composition bias toward polar residues. The segment covering 782-793 (PPKDGMRFRDDS) has biased composition (basic and acidic residues).

May influence blood pressure by functioning as a GTPase-activating protein in vascular smooth muscle. The chain is Rho GTPase-activating protein 42 from Danio rerio (Zebrafish).